The sequence spans 583 residues: Proline--tRNA ligase (583 aa).

The protein belongs to the class-II aminoacyl-tRNA synthetase family. ProS type 1 subfamily. As to quaternary structure, homodimer.

It localises to the cytoplasm. It catalyses the reaction tRNA(Pro) + L-proline + ATP = L-prolyl-tRNA(Pro) + AMP + diphosphate. Its function is as follows. Catalyzes the attachment of proline to tRNA(Pro) in a two-step reaction: proline is first activated by ATP to form Pro-AMP and then transferred to the acceptor end of tRNA(Pro). As ProRS can inadvertently accommodate and process non-cognate amino acids such as alanine and cysteine, to avoid such errors it has two additional distinct editing activities against alanine. One activity is designated as 'pretransfer' editing and involves the tRNA(Pro)-independent hydrolysis of activated Ala-AMP. The other activity is designated 'posttransfer' editing and involves deacylation of mischarged Ala-tRNA(Pro). The misacylated Cys-tRNA(Pro) is not edited by ProRS. In Acidothermus cellulolyticus (strain ATCC 43068 / DSM 8971 / 11B), this protein is Proline--tRNA ligase.